A 598-amino-acid chain; its full sequence is Mitochondrial distribution and morphology protein 30 (598 aa).

The F-box domain maps to 13–59; that stretch reads SFTIDHLPPEIWLCISKLVGTSDLHNLCLINRRLYLTITSDEIWKRR.

In terms of assembly, interacts with SKP1. Component of the probable SCF(MDM30) complex containing CDC53, SKP1, RBX1 and MDM30. Interacts with SKP1 and FZO1.

Its subcellular location is the cytoplasm. It is found in the mitochondrion. The protein operates within protein modification; protein ubiquitination. In terms of biological role, substrate recognition component of a SCF (SKP1-CUL1-F-box protein) E3 ubiquitin-protein ligase complex which mediates the ubiquitination and subsequent proteasomal degradation of target proteins. Probably recognizes and binds to phosphorylated target proteins. Recognizes FZO1 and regulates the amount of FZO1. Regulatory factor for the mitochondrial fusion machinery. Required for mitochondrial DNA maintenance. The polypeptide is Mitochondrial distribution and morphology protein 30 (MDM30) (Saccharomyces cerevisiae (strain ATCC 204508 / S288c) (Baker's yeast)).